The chain runs to 327 residues: CREB homolog crh-1 (327 aa).

The KID domain maps to 16-75; the sequence is SPLMMLLFKALQEGGDSEDEARRRREQLNRRPSYRMILKDLETADKVMKKEPEETPPSSV. 2 disordered regions span residues 27–114 and 151–200; these read QEGG…SPYG and KVFP…VQSL. Basic and acidic residues predominate over residues 35–44; the sequence is EARRRREQLN. A Phosphoserine modification is found at Ser48. The span at 52–68 shows a compositional bias: basic and acidic residues; the sequence is ILKDLETADKVMKKEPE. Polar residues predominate over residues 71–84; that stretch reads PPSSVDASPLQFQS. Residues 161-172 show a composition bias toward gly residues; sequence GLGGGGGGGGVP. The span at 173-199 shows a compositional bias: low complexity; that stretch reads GPSSGIAGMSVQPPTSSTPSQQQSVQS. In terms of domain architecture, bZIP spans 266-317; that stretch reads NRKRQVRLLKNREAAKECRRKKKEYVKCLENRVSVLENQNKALIEELKTLKE. The segment at 267-292 is basic motif; that stretch reads RKRQVRLLKNREAAKECRRKKKEYVK. A coiled-coil region spans residues 284–318; the sequence is RRKKKEYVKCLENRVSVLENQNKALIEELKTLKEL. The leucine-zipper stretch occupies residues 294–315; it reads LENRVSVLENQNKALIEELKTL.

The protein belongs to the bZIP family. In terms of assembly, interacts with CREB-regulated transcription coactivator homolog crtc-1. In terms of processing, transcriptional activity is enhanced by phosphorylation. Phosphorylated by cmk-1. In terms of tissue distribution, expressed widely, including in head neurons AFD, gustatory neurons ASE, the olfactory neurons AWC, and in the ASI sensory neurons, as well as in the intestine and gonads in hermaphrodites.

It localises to the nucleus. Functionally, transcription factor. Transcriptional activity probably positively regulated by phosphorylation. Modulates expression of target genes, acting by binding to regulatory cAMP response elements (CRE). Acts downstream of the calcium-triggered CaMKK-CaMK1 signaling cascade, consisting of the protein kinase kinase ckk-1 and the protein kinase cmk-1. Plays a role in learning and memory, feeding behavior, stress response, entry into the dauer stage and modulation of lifespan. Involved in commitment to the developmentally arrested larval state known as dauer, acting by positively regulating the expression of dauer-inhibiting TGF-beta-like daf-7 in the ASI neurons. Plays a role in both associative and non-associative long-term memory (LTM). Involved in modulating feeding behavior, acting by regulating transcription of tryptophan hydroxylase tph-1 in serotonergic ADF neurons. Regulates transcription of genes involved in endoplasmic reticulum (ER) stress. Involved in modulation of lifespan, in response to raised temperature, but independently of the heat-shock response pathway, acting by regulating transcription of FMRFamide-like neuropeptides flp-6 in the AFD neuron. Plays a role in associative long-term memory (LTM) and learning. In terms of biological role, plays a role in associative long-term memory (LTM) and learning; perhaps required at the time of acquisition and/or the consolidation phase of memory formation. This is CREB homolog crh-1 from Caenorhabditis elegans.